The sequence spans 363 residues: NADH-quinone oxidoreductase subunit H (363 aa).

The next 10 helical transmembrane spans lie at 29-49 (VLKI…YVVW), 62-82 (GPMY…KLLF), 96-116 (FIIA…VVPF), 127-147 (VGLL…ILAG), 163-183 (AAQV…VMIA), 202-222 (FFDW…VSGV), 239-257 (IVAG…LFFL), 264-286 (ILVS…QGWV), 299-319 (TGGW…YIWF), and 339-359 (FIPL…YGVI).

This sequence belongs to the complex I subunit 1 family. In terms of assembly, NDH-1 is composed of 14 different subunits. Subunits NuoA, H, J, K, L, M, N constitute the membrane sector of the complex.

It localises to the cell inner membrane. The catalysed reaction is a quinone + NADH + 5 H(+)(in) = a quinol + NAD(+) + 4 H(+)(out). Functionally, NDH-1 shuttles electrons from NADH, via FMN and iron-sulfur (Fe-S) centers, to quinones in the respiratory chain. The immediate electron acceptor for the enzyme in this species is believed to be ubiquinone. Couples the redox reaction to proton translocation (for every two electrons transferred, four hydrogen ions are translocated across the cytoplasmic membrane), and thus conserves the redox energy in a proton gradient. This subunit may bind ubiquinone. This chain is NADH-quinone oxidoreductase subunit H, found in Xanthomonas campestris pv. campestris (strain B100).